The following is a 311-amino-acid chain: NAD kinase (311 aa).

Residue aspartate 88 is the Proton acceptor of the active site. NAD(+) contacts are provided by residues 88–89 (DG), 162–163 (NE), arginine 190, aspartate 192, valine 200, and 203–208 (TAHNLS).

The protein belongs to the NAD kinase family. Requires a divalent metal cation as cofactor.

It localises to the cytoplasm. The catalysed reaction is NAD(+) + ATP = ADP + NADP(+) + H(+). Involved in the regulation of the intracellular balance of NAD and NADP, and is a key enzyme in the biosynthesis of NADP. Catalyzes specifically the phosphorylation on 2'-hydroxyl of the adenosine moiety of NAD to yield NADP. This is NAD kinase from Rhodopirellula baltica (strain DSM 10527 / NCIMB 13988 / SH1).